We begin with the raw amino-acid sequence, 112 residues long: 2Fe-2S ferredoxin (112 aa).

The 2Fe-2S ferredoxin-type domain maps to 5-107 (IKVTFIINDE…GIKVRLPSAT (103 aa)). The [2Fe-2S] cluster site is built by C42, C48, C51, and C88.

This sequence belongs to the adrenodoxin/putidaredoxin family. [2Fe-2S] cluster is required as a cofactor.

Its function is as follows. Ferredoxin are iron-sulfur proteins that transfer electrons in a wide variety of metabolic reactions. This Rickettsia prowazekii (strain Madrid E) protein is 2Fe-2S ferredoxin (fdxB).